The primary structure comprises 437 residues: Epsilon-sarcoglycan (437 aa).

The Extracellular portion of the chain corresponds to M1–F317. The N-linked (GlcNAc...) asparagine glycan is linked to N200. Residues L318–I338 traverse the membrane as a helical segment. At M339–P437 the chain is on the cytoplasmic side.

Belongs to the sarcoglycan alpha/epsilon family. Post-translationally, N-glycosylated. Ubiquitinated, leading to its degradation by the proteasome.

It is found in the cell membrane. The protein localises to the sarcolemma. It localises to the cytoplasm. The protein resides in the cytoskeleton. Its subcellular location is the cell projection. It is found in the dendrite. The protein localises to the golgi apparatus. Functionally, component of the sarcoglycan complex, a subcomplex of the dystrophin-glycoprotein complex which forms a link between the F-actin cytoskeleton and the extracellular matrix. In Pongo abelii (Sumatran orangutan), this protein is Epsilon-sarcoglycan.